Consider the following 418-residue polypeptide: Tektin-1 (418 aa).

Coiled-coil stretches lie at residues 20–107 (NKSQ…SYKE), 134–177 (QELQ…DLRD), 266–308 (NGLK…QQEG), and 332–383 (IAQY…ENTI).

It belongs to the tektin family. As to quaternary structure, microtubule inner protein component of sperm flagellar doublet microtubules. Ubiquitinated, leading to its degradation. Deubiquitinated by USP16, promoting its stability.

It localises to the cytoplasm. The protein localises to the cytoskeleton. The protein resides in the cilium axoneme. Its subcellular location is the flagellum axoneme. Microtubule inner protein (MIP) part of the dynein-decorated doublet microtubules (DMTs) in cilia and flagellar axoneme. Forms filamentous polymers in the walls of ciliary and flagellar microtubules. This is Tektin-1 (Tekt1) from Mus musculus (Mouse).